The chain runs to 364 residues: tRNA N6-adenosine threonylcarbamoyltransferase (364 aa).

Residues His118 and His122 each contribute to the Fe cation site. Substrate contacts are provided by residues 140-144 (LVSGG), Asp173, Gly186, and Asn288. Asp316 contacts Fe cation.

This sequence belongs to the KAE1 / TsaD family. Fe(2+) serves as cofactor.

The protein localises to the cytoplasm. It catalyses the reaction L-threonylcarbamoyladenylate + adenosine(37) in tRNA = N(6)-L-threonylcarbamoyladenosine(37) in tRNA + AMP + H(+). In terms of biological role, required for the formation of a threonylcarbamoyl group on adenosine at position 37 (t(6)A37) in tRNAs that read codons beginning with adenine. Is involved in the transfer of the threonylcarbamoyl moiety of threonylcarbamoyl-AMP (TC-AMP) to the N6 group of A37, together with TsaE and TsaB. TsaD likely plays a direct catalytic role in this reaction. The polypeptide is tRNA N6-adenosine threonylcarbamoyltransferase (Cereibacter sphaeroides (strain KD131 / KCTC 12085) (Rhodobacter sphaeroides)).